A 397-amino-acid chain; its full sequence is Pyruvate dehydrogenase E1 component subunit alpha, mitochondrial (397 aa).

10 residues coordinate pyruvate: histidine 98, tyrosine 124, arginine 125, glycine 173, valine 175, aspartate 204, glycine 205, alanine 206, asparagine 233, and tyrosine 235. Thiamine diphosphate contacts are provided by tyrosine 124, arginine 125, glycine 173, valine 175, aspartate 204, glycine 205, alanine 206, and asparagine 233. Residue aspartate 204 coordinates Mg(2+). Residues asparagine 233 and tyrosine 235 each contribute to the Mg(2+) site. Histidine 299 contacts thiamine diphosphate.

As to quaternary structure, tetramer of 2 alpha and 2 beta subunits. Thiamine diphosphate serves as cofactor. It depends on Mg(2+) as a cofactor.

Its subcellular location is the mitochondrion matrix. It catalyses the reaction N(6)-[(R)-lipoyl]-L-lysyl-[protein] + pyruvate + H(+) = N(6)-[(R)-S(8)-acetyldihydrolipoyl]-L-lysyl-[protein] + CO2. With respect to regulation, E1 activity is regulated by phosphorylation (inactivation) and dephosphorylation (activation) of the alpha subunit. In terms of biological role, the pyruvate dehydrogenase complex catalyzes the overall conversion of pyruvate to acetyl-CoA and CO(2). It contains multiple copies of three enzymatic components: pyruvate dehydrogenase (E1), dihydrolipoamide acetyltransferase (E2) and lipoamide dehydrogenase (E3). The sequence is that of Pyruvate dehydrogenase E1 component subunit alpha, mitochondrial from Pisum sativum (Garden pea).